Here is a 105-residue protein sequence, read N- to C-terminus: Nucleoid-associated protein SE_2306 (105 aa).

Residues 1–40 (MRGGGNMQQMMKQMQKMQKKMAQEQEKLKEERVAGTAGGG) are disordered. Residues 7–16 (MQQMMKQMQK) are compositionally biased toward low complexity. Basic and acidic residues predominate over residues 21-33 (MAQEQEKLKEERV).

The protein belongs to the YbaB/EbfC family. In terms of assembly, homodimer.

The protein localises to the cytoplasm. It is found in the nucleoid. In terms of biological role, binds to DNA and alters its conformation. May be involved in regulation of gene expression, nucleoid organization and DNA protection. In Staphylococcus epidermidis (strain ATCC 12228 / FDA PCI 1200), this protein is Nucleoid-associated protein SE_2306.